The primary structure comprises 700 residues: Beta-galactosidase Bga (700 aa).

Position 103 (Arg103) interacts with substrate. Cys107 contributes to the Zn(2+) binding site. Asn141 contacts substrate. Glu142 functions as the Proton donor in the catalytic mechanism. Positions 151, 153, and 156 each coordinate Zn(2+). Catalysis depends on Glu312, which acts as the Nucleophile. Substrate is bound by residues Trp320 and 360-363; that span reads EQYH. A compositionally biased stretch (acidic residues) spans 648–658; that stretch reads DPESLAVDDTD. The disordered stretch occupies residues 648–674; that stretch reads DPESLAVDDTDRDGFDPMADDDKDSSA.

It belongs to the glycosyl hydrolase 42 family.

It carries out the reaction Hydrolysis of terminal non-reducing beta-D-galactose residues in beta-D-galactosides.. With respect to regulation, requires 4 M NaCl or KCl for maximal activity. Functionally, cleaves o-nitrophenyl-beta-D-galactopyranoside (ONPG) in vitro. The protein is Beta-galactosidase Bga of Halorubrum lacusprofundi (strain ATCC 49239 / DSM 5036 / JCM 8891 / ACAM 34).